The sequence spans 87 residues: Antitoxin RelB1 (87 aa).

Functionally, antitoxin component of a type II toxin-antitoxin (TA) system. Neutralizes the effect of cognate toxin RelE1, but no other RelE or ParE toxin. The polypeptide is Antitoxin RelB1 (relB1) (Caulobacter vibrioides (strain ATCC 19089 / CIP 103742 / CB 15) (Caulobacter crescentus)).